The sequence spans 183 residues: Ferredoxin-2, mitochondrial (183 aa).

Residues 1–52 (MAASVAWGGVNAGFLLRAARGAWWSRPGGFWGSGEAAAPAIARKFRATGSRP) constitute a mitochondrion transit peptide. Residues 68 to 170 (VNVVFVDRSG…GAEFTLPKIT (103 aa)) form the 2Fe-2S ferredoxin-type domain. [2Fe-2S] cluster contacts are provided by C105, C111, C114, and C151.

It belongs to the adrenodoxin/putidaredoxin family. As to quaternary structure, component of the mitochondrial core iron-sulfur cluster (ISC) complex composed of NFS1, LYRM4, NDUFAB1, ISCU, FXN, and FDX2; this complex is a heterohexamer containing two copies of each monomer. Form a heterodimer complex with NFS1. Interacts (in both their reduced and oxidized states) with the cysteine desulfurase (NFS1:LYRM4) complex; this interaction stimulates cysteine desulfurase activity, and serves as a reductant for Fe-S cluster assembly. [2Fe-2S] cluster serves as cofactor.

The protein localises to the mitochondrion. It is found in the mitochondrion matrix. Its function is as follows. Electron donor, of the core iron-sulfur cluster (ISC) assembly complex, that acts to reduce the persulfide into sulfide during [2Fe-2S] clusters assembly on the scaffolding protein ISCU. The core iron-sulfur cluster (ISC) assembly complex is involved in the de novo synthesis of a [2Fe-2S] cluster, the first step of the mitochondrial iron-sulfur protein biogenesis. This process is initiated by the cysteine desulfurase complex (NFS1:LYRM4:NDUFAB1) that produces persulfide which is delivered on the scaffold protein ISCU in a FXN-dependent manner. Then this complex is stabilized by FDX2 which provides reducing equivalents to accomplish the [2Fe-2S] cluster assembly. Finally, the [2Fe-2S] cluster is transferred from ISCU to chaperone proteins, including HSCB, HSPA9 and GLRX5. Essential for coenzyme Q biosynthesis: together with FDXR, transfers the electrons required for the hydroxylation reaction performed by COQ6. The chain is Ferredoxin-2, mitochondrial from Bos taurus (Bovine).